Consider the following 71-residue polypeptide: ATP synthase subunit c 1 (71 aa).

Transmembrane regions (helical) follow at residues 4–24 and 46–66; these read FIGAGLATIGLGGAGIGVGHV and LFVGIAFAEALGIFSFLIALL.

Belongs to the ATPase C chain family. As to quaternary structure, F-type ATPases have 2 components, F(1) - the catalytic core - and F(0) - the membrane proton channel. F(1) has five subunits: alpha(3), beta(3), gamma(1), delta(1), epsilon(1). F(0) has four main subunits: a(1), b(1), b'(1) and c(10-14). The alpha and beta chains form an alternating ring which encloses part of the gamma chain. F(1) is attached to F(0) by a central stalk formed by the gamma and epsilon chains, while a peripheral stalk is formed by the delta, b and b' chains.

Its subcellular location is the cell inner membrane. F(1)F(0) ATP synthase produces ATP from ADP in the presence of a proton or sodium gradient. F-type ATPases consist of two structural domains, F(1) containing the extramembraneous catalytic core and F(0) containing the membrane proton channel, linked together by a central stalk and a peripheral stalk. During catalysis, ATP synthesis in the catalytic domain of F(1) is coupled via a rotary mechanism of the central stalk subunits to proton translocation. In terms of biological role, key component of the F(0) channel; it plays a direct role in translocation across the membrane. A homomeric c-ring of between 10-14 subunits forms the central stalk rotor element with the F(1) delta and epsilon subunits. The protein is ATP synthase subunit c 1 of Cereibacter sphaeroides (strain ATCC 17029 / ATH 2.4.9) (Rhodobacter sphaeroides).